A 78-amino-acid chain; its full sequence is uncharacterized protein (78 aa).

The tract at residues 1–28 (MQANHSVSYLYESSTSKRSNGLFSQTQK) is disordered.

This is an uncharacterized protein from Saccharomyces cerevisiae (strain ATCC 204508 / S288c) (Baker's yeast).